We begin with the raw amino-acid sequence, 416 residues long: UDP-N-acetylglucosamine 1-carboxyvinyltransferase (416 aa).

22-23 (KN) contacts phosphoenolpyruvate. Arg91 is a UDP-N-acetyl-alpha-D-glucosamine binding site. The active-site Proton donor is Cys115. At Cys115 the chain carries 2-(S-cysteinyl)pyruvic acid O-phosphothioketal. UDP-N-acetyl-alpha-D-glucosamine-binding positions include 120 to 124 (RPVDL), Asp303, and Ile325.

It belongs to the EPSP synthase family. MurA subfamily.

The protein localises to the cytoplasm. The catalysed reaction is phosphoenolpyruvate + UDP-N-acetyl-alpha-D-glucosamine = UDP-N-acetyl-3-O-(1-carboxyvinyl)-alpha-D-glucosamine + phosphate. The protein operates within cell wall biogenesis; peptidoglycan biosynthesis. Functionally, cell wall formation. Adds enolpyruvyl to UDP-N-acetylglucosamine. In Oleidesulfovibrio alaskensis (strain ATCC BAA-1058 / DSM 17464 / G20) (Desulfovibrio alaskensis), this protein is UDP-N-acetylglucosamine 1-carboxyvinyltransferase.